A 152-amino-acid polypeptide reads, in one-letter code: Cell division protein SepF (152 aa).

Residues 25–54 form a disordered region; that stretch reads EEREPVQEEKGTKDKAAFQERPQTGKQNVV. Residues 28–42 show a composition bias toward basic and acidic residues; the sequence is EPVQEEKGTKDKAAF.

It belongs to the SepF family. Homodimer. Interacts with FtsZ.

It localises to the cytoplasm. Functionally, cell division protein that is part of the divisome complex and is recruited early to the Z-ring. Probably stimulates Z-ring formation, perhaps through the cross-linking of FtsZ protofilaments. Its function overlaps with FtsA. This chain is Cell division protein SepF, found in Bacillus pumilus (strain SAFR-032).